A 49-amino-acid chain; its full sequence is Large ribosomal subunit protein bL33A (49 aa).

Belongs to the bacterial ribosomal protein bL33 family.

In Geobacillus kaustophilus (strain HTA426), this protein is Large ribosomal subunit protein bL33A.